Here is a 314-residue protein sequence, read N- to C-terminus: Oxaloacetate tautomerase FAHD2B, mitochondrial (314 aa).

The N-terminal 84 residues, 1–84, are a transit peptide targeting the mitochondrion; the sequence is MLVSGRRRLL…ATLSVARRAL (84 aa). Positions 159, 161, and 190 each coordinate Mg(2+).

Belongs to the FAH family. Mg(2+) is required as a cofactor. Requires Mn(2+) as cofactor.

It localises to the mitochondrion. The enzyme catalyses oxaloacetate = enol-oxaloacetate. In terms of biological role, tautomerase that converts enol-oxaloacetate, a strong inhibitor of succinate dehydrogenase, to the physiological keto form of oxaloacetate. It is thereby required to maximize aerobic respiration efficiency by preventing succinate dehydrogenase inhibition. The polypeptide is Oxaloacetate tautomerase FAHD2B, mitochondrial (Homo sapiens (Human)).